Here is a 443-residue protein sequence, read N- to C-terminus: Glutamyl-tRNA reductase (443 aa).

Residues 49 to 52 (TCNR), Ser109, 114 to 116 (ETQ), and Gln120 contribute to the substrate site. Residue Cys50 is the Nucleophile of the active site. 189 to 194 (GAGEMS) is an NADP(+) binding site.

It belongs to the glutamyl-tRNA reductase family. As to quaternary structure, homodimer.

The catalysed reaction is (S)-4-amino-5-oxopentanoate + tRNA(Glu) + NADP(+) = L-glutamyl-tRNA(Glu) + NADPH + H(+). Its pathway is porphyrin-containing compound metabolism; protoporphyrin-IX biosynthesis; 5-aminolevulinate from L-glutamyl-tRNA(Glu): step 1/2. Functionally, catalyzes the NADPH-dependent reduction of glutamyl-tRNA(Glu) to glutamate 1-semialdehyde (GSA). This chain is Glutamyl-tRNA reductase, found in Desulfitobacterium hafniense (strain DSM 10664 / DCB-2).